A 386-amino-acid polypeptide reads, in one-letter code: Chaperone protein DnaJ (386 aa).

The 66-residue stretch at 6-71 folds into the J domain; it reads DYYEILGVDR…QKRARYDQFG (66 aa). A CR-type zinc finger spans residues 144-226; that stretch reads GTEKEVTVSR…CGGKGRVRKH (83 aa). Zn(2+) is bound by residues cysteine 157, cysteine 160, cysteine 174, cysteine 177, cysteine 200, cysteine 203, cysteine 214, and cysteine 217. CXXCXGXG motif repeat units follow at residues 157-164, 174-181, 200-207, and 214-221; these read CPTCSGSG, CRQCNGTG, CDVCHGEG, and CETCGGKG.

This sequence belongs to the DnaJ family. In terms of assembly, homodimer. Requires Zn(2+) as cofactor.

It localises to the cytoplasm. Its function is as follows. Participates actively in the response to hyperosmotic and heat shock by preventing the aggregation of stress-denatured proteins and by disaggregating proteins, also in an autonomous, DnaK-independent fashion. Unfolded proteins bind initially to DnaJ; upon interaction with the DnaJ-bound protein, DnaK hydrolyzes its bound ATP, resulting in the formation of a stable complex. GrpE releases ADP from DnaK; ATP binding to DnaK triggers the release of the substrate protein, thus completing the reaction cycle. Several rounds of ATP-dependent interactions between DnaJ, DnaK and GrpE are required for fully efficient folding. Also involved, together with DnaK and GrpE, in the DNA replication of plasmids through activation of initiation proteins. In Acetivibrio thermocellus (strain ATCC 27405 / DSM 1237 / JCM 9322 / NBRC 103400 / NCIMB 10682 / NRRL B-4536 / VPI 7372) (Clostridium thermocellum), this protein is Chaperone protein DnaJ.